The sequence spans 62 residues: Large ribosomal subunit protein uL30 (62 aa).

The protein belongs to the universal ribosomal protein uL30 family. In terms of assembly, part of the 50S ribosomal subunit.

The chain is Large ribosomal subunit protein uL30 from Herpetosiphon aurantiacus (strain ATCC 23779 / DSM 785 / 114-95).